A 360-amino-acid chain; its full sequence is Peptide chain release factor 1 (360 aa).

Q235 carries the post-translational modification N5-methylglutamine. The segment at R286–P313 is disordered.

Belongs to the prokaryotic/mitochondrial release factor family. In terms of processing, methylated by PrmC. Methylation increases the termination efficiency of RF1.

It is found in the cytoplasm. Functionally, peptide chain release factor 1 directs the termination of translation in response to the peptide chain termination codons UAG and UAA. The polypeptide is Peptide chain release factor 1 (Cronobacter sakazakii (strain ATCC BAA-894) (Enterobacter sakazakii)).